The chain runs to 525 residues: Serine/threonine protein phosphatase 2A 55 kDa regulatory subunit B beta isoform (525 aa).

Residues 1–31 form a disordered region; sequence MDPFSKSPDDDDLRPEAEAARRPQPQPQPRE. WD repeat units lie at residues 48–87 and 124–165; these read QEVD…DSAS and EIEE…VKRI. The tract at residues 169-191 is disordered; the sequence is NLNTSQSSGNGTTSSSSSSSSRA. The span at 171-189 shows a compositional bias: low complexity; the sequence is NTSQSSGNGTTSSSSSSSS. WD repeat units lie at residues 244–282, 293–333, 352–390, and 495–525; these read AHDY…QSFN, DLTE…LCDN, EIIA…GPVA, and DLST…MYYA.

Belongs to the phosphatase 2A regulatory subunit B family. PP2A consists of a common heteromeric enzyme, composed of a catalytic subunit (subunits C), a constant regulatory subunit (subunit A), and a variety of regulatory subunits such as subunits B (the R2/B/PR55/B55, R3/B''/PR72/PR130/PR59 and R5/B'/B56 families).

Functionally, the B regulatory subunit may modulate substrate selectivity and catalytic activity, and may also direct the localization of the catalytic enzyme to a particular subcellular compartment. This is Serine/threonine protein phosphatase 2A 55 kDa regulatory subunit B beta isoform from Oryza sativa subsp. indica (Rice).